We begin with the raw amino-acid sequence, 319 residues long: 2-oxoglutarate and iron-dependent oxygenase domain-containing protein 3 (319 aa).

Residues 1 to 34 (MAPQRRAATKAPEGNGAAERRNRSSTKKDRAPRE) are disordered. Over 1-42 (MAPQRRAATKAPEGNGAAERRNRSSTKKDRAPREVQRLWQRP) the chain is Cytoplasmic. Residues 18-34 (AERRNRSSTKKDRAPRE) show a composition bias toward basic and acidic residues. Residues 43 to 65 (WLRTAGLGAGFVLTALLLWSSLG) form a helical; Signal-anchor for type II membrane protein membrane-spanning segment. Residues 66-319 (ADDGVAEVLA…DHGIEDPAFP (254 aa)) are Lumenal-facing. In terms of domain architecture, Fe2OG dioxygenase spans 207-309 (KPTFFSRINS…AITIAFSCNP (103 aa)). A glycan (N-linked (GlcNAc...) asparagine) is linked at N215. Residues H230, D232, and H288 each coordinate Fe cation. R298 is a catalytic residue. R298 provides a ligand contact to 2-oxoglutarate.

Belongs to the OGFOD3 family. Requires Fe(2+) as cofactor. L-ascorbate serves as cofactor.

It is found in the membrane. The chain is 2-oxoglutarate and iron-dependent oxygenase domain-containing protein 3 (OGFOD3) from Homo sapiens (Human).